A 239-amino-acid chain; its full sequence is Ribonuclease 3 (239 aa).

One can recognise an RNase III domain in the interval R12–G137. A Mg(2+)-binding site is contributed by E50. The active site involves D54. Residues D123 and E126 each coordinate Mg(2+). The active site involves E126. The DRBM domain maps to D162–V231.

Belongs to the ribonuclease III family. In terms of assembly, homodimer. Requires Mg(2+) as cofactor.

The protein resides in the cytoplasm. The catalysed reaction is Endonucleolytic cleavage to 5'-phosphomonoester.. In terms of biological role, digests double-stranded RNA. Involved in the processing of primary rRNA transcript to yield the immediate precursors to the large and small rRNAs (23S and 16S). Processes some mRNAs, and tRNAs when they are encoded in the rRNA operon. Processes pre-crRNA and tracrRNA of type II CRISPR loci if present in the organism. This Sinorhizobium fredii (strain NBRC 101917 / NGR234) protein is Ribonuclease 3.